The sequence spans 328 residues: UPF0285 protein Mevan_1551 (328 aa).

It belongs to the UPF0285 family.

The polypeptide is UPF0285 protein Mevan_1551 (Methanococcus vannielii (strain ATCC 35089 / DSM 1224 / JCM 13029 / OCM 148 / SB)).